A 128-amino-acid chain; its full sequence is Small ribosomal subunit protein uS9c (128 aa).

It belongs to the universal ribosomal protein uS9 family.

The protein localises to the plastid. In Euglena longa (Euglenophycean alga), this protein is Small ribosomal subunit protein uS9c (rps9).